The following is a 284-amino-acid chain: Ribosomal RNA small subunit methyltransferase A (284 aa).

6 residues coordinate S-adenosyl-L-methionine: Asn-28, Leu-30, Gly-55, Glu-77, Asp-103, and Asn-123.

Belongs to the class I-like SAM-binding methyltransferase superfamily. rRNA adenine N(6)-methyltransferase family. RsmA subfamily.

The protein localises to the cytoplasm. The enzyme catalyses adenosine(1518)/adenosine(1519) in 16S rRNA + 4 S-adenosyl-L-methionine = N(6)-dimethyladenosine(1518)/N(6)-dimethyladenosine(1519) in 16S rRNA + 4 S-adenosyl-L-homocysteine + 4 H(+). Specifically dimethylates two adjacent adenosines (A1518 and A1519) in the loop of a conserved hairpin near the 3'-end of 16S rRNA in the 30S particle. May play a critical role in biogenesis of 30S subunits. In Bradyrhizobium diazoefficiens (strain JCM 10833 / BCRC 13528 / IAM 13628 / NBRC 14792 / USDA 110), this protein is Ribosomal RNA small subunit methyltransferase A.